The chain runs to 173 residues: Disulfide bond formation protein B (173 aa).

Over 1–14 the chain is Cytoplasmic; it reads MIEFLRRIAAHRLA. Residues 15–31 form a helical membrane-spanning segment; sequence WGLLAASALFLELSALF. Residues 32-49 lie on the Periplasmic side of the membrane; sequence FQYVLGLHPCVMCVYERL. A disulfide bridge links Cys41 with Cys44. The helical transmembrane segment at 50-65 threads the bilayer; it reads AILGVLSAGLLGMVAP. Residues 66–72 lie on the Cytoplasmic side of the membrane; it reads EKWYLRW. A helical membrane pass occupies residues 73–90; sequence SALLLWGYSAFRGLQLAL. Residues 91-145 lie on the Periplasmic side of the membrane; sequence KHVDYQMNPSPFNVCSPFADFPSWAPLDQWLPWLFFPDGDCSEISWQFLSFSMPQ. Cys105 and Cys131 are oxidised to a cystine. Residues 146-164 traverse the membrane as a helical segment; the sequence is WLVAIFAAYLLVFVVVTIG. Over 165 to 173 the chain is Cytoplasmic; sequence NLVKGRCCS.

The protein belongs to the DsbB family.

It localises to the cell inner membrane. Functionally, required for disulfide bond formation in some periplasmic proteins. Acts by oxidizing the DsbA protein. In Aeromonas salmonicida (strain A449), this protein is Disulfide bond formation protein B.